The primary structure comprises 818 residues: Phenylalanine--tRNA ligase beta subunit (818 aa).

The 110-residue stretch at 39-148 (AAELQKFEVA…EDAVVGENFT (110 aa)) folds into the tRNA-binding domain. Residues 423-498 (PQKKPLDFSA…RIYGYDKIES (76 aa)) enclose the B5 domain. Positions 476, 482, 485, and 486 each coordinate Mg(2+). Residues 724-817 (SDFQANFRDY…IEQKFQGTLR (94 aa)) enclose the FDX-ACB domain.

It belongs to the phenylalanyl-tRNA synthetase beta subunit family. Type 1 subfamily. As to quaternary structure, tetramer of two alpha and two beta subunits. Mg(2+) serves as cofactor.

The protein resides in the cytoplasm. The enzyme catalyses tRNA(Phe) + L-phenylalanine + ATP = L-phenylalanyl-tRNA(Phe) + AMP + diphosphate + H(+). The polypeptide is Phenylalanine--tRNA ligase beta subunit (Rickettsia felis (strain ATCC VR-1525 / URRWXCal2) (Rickettsia azadi)).